The sequence spans 391 residues: Transforming growth factor beta-1 proprotein (391 aa).

An N-terminal signal peptide occupies residues 1–18 (MDPSPLLALLLLLGAARA). The interval 19–63 (LSTCQRLDLEAAKKKRIEAVRGQILSKLRLTAPPPASETPPRPLP) is straightjacket domain. The tract at residues 64 to 270 (DDVRALYNST…ALPAERANEL (207 aa)) is arm domain. 3 N-linked (GlcNAc...) asparagine glycosylation sites follow: N71, N126, and N171. Residues 221 to 249 (EMGPGHADEMRISIEGFEQQRGDMQSIAK) are bowtie tail. The Cell attachment site motif lies at 241 to 243 (RGD). Cystine bridges form between C284/C295, C294/C357, C323/C388, and C327/C390.

Belongs to the TGF-beta family. In terms of assembly, latency-associated peptide: Homodimer; disulfide-linked. Latency-associated peptide: Interacts with Transforming growth factor beta-1 (TGF-beta-1) chain; interaction is non-covalent and maintains (TGF-beta-1) in a latent state; each Latency-associated peptide (LAP) monomer interacts with TGF-beta-1 in the other monomer. Transforming growth factor beta-1: Homodimer; disulfide-linked. Transforming growth factor beta-1: Interacts with TGF-beta receptors (TGFBR1 and TGFBR2), leading to signal transduction. In terms of processing, transforming growth factor beta-1 proprotein: The precursor proprotein is cleaved in the Golgi apparatus to form Transforming growth factor beta-1 (TGF-beta-1) and Latency-associated peptide (LAP) chains, which remain non-covalently linked, rendering TGF-beta-1 inactive.

The protein localises to the secreted. It localises to the extracellular space. Its subcellular location is the extracellular matrix. In terms of biological role, transforming growth factor beta-1 proprotein: Precursor of the Latency-associated peptide (LAP) and Transforming growth factor beta-1 (TGF-beta-1) chains, which constitute the regulatory and active subunit of TGF-beta-1, respectively. Required to maintain the Transforming growth factor beta-1 (TGF-beta-1) chain in a latent state during storage in extracellular matrix. Associates non-covalently with TGF-beta-1 and regulates its activation via interaction with 'milieu molecules', such as LTBP1, LRRC32/GARP and LRRC33/NRROS, that control activation of TGF-beta-1. Interaction with integrins (ITGAV:ITGB6 or ITGAV:ITGB8) results in distortion of the Latency-associated peptide chain and subsequent release of the active TGF-beta-1. Its function is as follows. Transforming growth factor beta-1: Multifunctional protein that regulates the growth and differentiation of various cell types and is involved in various processes, such as normal development, immune function, microglia function and responses to neurodegeneration. Activation into mature form follows different steps: following cleavage of the proprotein in the Golgi apparatus, Latency-associated peptide (LAP) and Transforming growth factor beta-1 (TGF-beta-1) chains remain non-covalently linked rendering TGF-beta-1 inactive during storage in extracellular matrix. At the same time, LAP chain interacts with 'milieu molecules', such as LTBP1, LRRC32/GARP and LRRC33/NRROS that control activation of TGF-beta-1 and maintain it in a latent state during storage in extracellular milieus. TGF-beta-1 is released from LAP by integrins (ITGAV:ITGB6 or ITGAV:ITGB8): integrin-binding to LAP stabilizes an alternative conformation of the LAP bowtie tail and results in distortion of the LAP chain and subsequent release of the active TGF-beta-1. Once activated following release of LAP, TGF-beta-1 acts by binding to TGF-beta receptors (TGFBR1 and TGFBR2), which transduce signal. While expressed by many cells types, TGF-beta-1 only has a very localized range of action within cell environment thanks to fine regulation of its activation by Latency-associated peptide chain (LAP) and 'milieu molecules'. Plays an important role in bone remodeling: acts as a potent stimulator of osteoblastic bone formation. Can promote either T-helper 17 cells (Th17) or regulatory T-cells (Treg) lineage differentiation in a concentration-dependent manner. Can induce epithelial-to-mesenchymal transition (EMT) and cell migration in various cell types. This is Transforming growth factor beta-1 proprotein (TGFB1) from Gallus gallus (Chicken).